We begin with the raw amino-acid sequence, 305 residues long: Probable 5-dehydro-4-deoxyglucarate dehydratase (305 aa).

This sequence belongs to the DapA family.

The catalysed reaction is 5-dehydro-4-deoxy-D-glucarate + H(+) = 2,5-dioxopentanoate + CO2 + H2O. It functions in the pathway carbohydrate acid metabolism; D-glucarate degradation; 2,5-dioxopentanoate from D-glucarate: step 2/2. This Xanthomonas campestris pv. campestris (strain 8004) protein is Probable 5-dehydro-4-deoxyglucarate dehydratase.